The sequence spans 193 residues: Small COPII coat GTPase SAR1 (193 aa).

The short motif at 3–5 (FLW) is the STAR; SAR1-N-terminal activation recruitment. Required for the activation and subsequent recruitment to ER membrane element. A mediates recruitment to ER membranes region spans residues 11 to 15 (VLNML). Residue Asp-30 coordinates Mg(2+). GDP-binding residues include Asn-31, Ala-32, Gly-33, Lys-34, Thr-35, and Thr-36. Asn-31 contributes to the GTP binding site. GTP-binding residues include Gly-33, Lys-34, Thr-35, and Thr-36. Residue Asp-71 participates in Mg(2+) binding. GDP is bound by residues Asn-130, Lys-131, Asp-133, Val-176, and Leu-177. Residues Asn-130, Lys-131, Asp-133, Val-176, and Leu-177 each contribute to the GTP site.

Belongs to the small GTPase superfamily. SAR1 family. Homodimer; upon association with membrane. Part of the coat protein complex II/COPII, composed of SEC23/24 and SEC13/31 heterodimers, that it helps recruit and assemble on endoplasmic reticulum (ER) membranes at ER exit sites.

The protein localises to the endoplasmic reticulum membrane. It localises to the golgi apparatus. Its subcellular location is the golgi stack membrane. The protein resides in the cytoplasm. It is found in the cytosol. It carries out the reaction GTP + H2O = GDP + phosphate + H(+). With respect to regulation, small GTPases activation is mediated by guanine exchange factors (GEF), while inactivation through hydrolysis of the bound GTP is stimulated by GTPase activating proteins (GAP). In terms of biological role, small GTPase that cycles between an active GTP-bound and an inactive GDP-bound state and mainly functions in vesicle-mediated endoplasmic reticulum (ER) to Golgi transport. The active GTP-bound form inserts into the endoplasmic reticulum membrane where it recruits the remainder of the coat protein complex II/COPII. The coat protein complex II assembling and polymerizing on endoplasmic reticulum membrane is responsible for both the sorting of cargos and the deformation and budding of membranes into vesicles destined to the Golgi. Plays a role in transporting the tyrosine kinase receptor let-23 from the endoplasmic reticulum to the plasma membrane of vulval precursor cells. The polypeptide is Small COPII coat GTPase SAR1 (Caenorhabditis elegans).